We begin with the raw amino-acid sequence, 670 residues long: Protein angel homolog 1 (670 aa).

Phosphoserine is present on residues Ser77 and Ser105.

It belongs to the CCR4/nocturin family.

This Homo sapiens (Human) protein is Protein angel homolog 1 (ANGEL1).